We begin with the raw amino-acid sequence, 948 residues long: Peroxisomal ATPase pex6 (948 aa).

695–702 serves as a coordination point for ATP; it reads GPPGTGKT.

Belongs to the AAA ATPase family. Interacts with PEX1; forming the PEX1-PEX6 AAA ATPase complex, which is composed of a heterohexamer formed by a trimer of PEX1-PEX6 dimers.

The protein localises to the cytoplasm. Its subcellular location is the cytosol. The protein resides in the peroxisome membrane. It carries out the reaction ATP + H2O = ADP + phosphate + H(+). Component of the PEX1-PEX6 AAA ATPase complex, a protein dislocase complex that mediates the ATP-dependent extraction of the PEX5 receptor from peroxisomal membranes, an essential step for PEX5 recycling. Specifically recognizes PEX5 monoubiquitinated at 'Cys-6', and pulls it out of the peroxisome lumen through the PEX2-PEX10-PEX12 retrotranslocation channel. Extraction by the PEX1-PEX6 AAA ATPase complex is accompanied by unfolding of the TPR repeats and release of bound cargo from PEX5. The polypeptide is Peroxisomal ATPase pex6 (pex6) (Schizosaccharomyces pombe (strain 972 / ATCC 24843) (Fission yeast)).